The following is a 190-amino-acid chain: FUN14 domain-containing protein 2 (190 aa).

Polar residues predominate over residues 1–13 (METSTQRTGSHLA). Positions 1-31 (METSTQRTGSHLAQTAAARHSASSRGEAARV) are disordered. Topologically, residues 1 to 81 (METSTQRTGS…GQESGPSAEK (81 aa)) are cytoplasmic. Phosphoserine occurs at positions 10 and 54. A helical transmembrane segment spans residues 82–102 (YSVATQLLIGGVTGWCTGFIF). The Mitochondrial intermembrane portion of the chain corresponds to 103–108 (QKVGKL). Residues 109 to 129 (AATAVGGGFFLLQLANHTGYI) form a helical membrane-spanning segment. The Cytoplasmic segment spans residues 130 to 165 (KVDWQRVEKDMKKAKEQLKIRKSNQIPTEVKSKAEE). S152 carries the post-translational modification Phosphoserine. Residues 166–186 (VVSFVKKNVLVTGGFFGGFLL) form a helical membrane-spanning segment. Topologically, residues 187–190 (GMAS) are mitochondrial intermembrane.

The protein belongs to the FUN14 family.

The protein resides in the mitochondrion outer membrane. It is found in the nucleus. Functionally, binds directly and specifically 1,2-Diacyl-sn-glycero-3-phospho-(1'-myo-inositol-3',4',5'-bisphosphate) (PIP3) leading to the recruitment of PIP3 to mitochondria and may play a role in the regulation of the platelet activation via AKT/GSK3B/cGMP signaling pathways. May act as transcription factor that regulates SREBP1 (isoform SREBP-1C) expression in order to modulate triglyceride (TG) homeostasis in hepatocytes. This chain is FUN14 domain-containing protein 2, found in Bos taurus (Bovine).